Consider the following 155-residue polypeptide: Ribosome maturation factor RimP (155 aa).

The protein belongs to the RimP family.

The protein resides in the cytoplasm. In terms of biological role, required for maturation of 30S ribosomal subunits. This is Ribosome maturation factor RimP from Synechococcus sp. (strain WH7803).